The chain runs to 148 residues: Hydrogenase expression/formation protein HoxO (148 aa).

The disordered stretch occupies residues 128–148 (IPVLSPESGTPSCSPMETSES). The span at 134-148 (ESGTPSCSPMETSES) shows a compositional bias: polar residues.

The protein belongs to the HupG/HyaE family.

This chain is Hydrogenase expression/formation protein HoxO (hoxO), found in Azotobacter vinelandii.